Consider the following 65-residue polypeptide: MPKLKTHRGAAKRFKLTGSGKVRRHHANASHIMTTKTTKRKRNLRKSTILDKRDEKGIKRLIPYL.

Residues 20-42 (GKVRRHHANASHIMTTKTTKRKR) are disordered.

The protein belongs to the bacterial ribosomal protein bL35 family.

The protein is Large ribosomal subunit protein bL35 of Syntrophus aciditrophicus (strain SB).